The sequence spans 1132 residues: Protein CROWDED NUCLEI 1 (1132 aa).

Positions 1 to 31 (MSTPLKVWQRWSTPTKATNPDSNGSSHGTGL) are disordered. The span at 10–28 (RWSTPTKATNPDSNGSSHG) shows a compositional bias: polar residues. Residues 73–714 (LLIEKKEWSS…KKLKEQREQF (642 aa)) are a coiled coil. 2 consecutive short sequence motifs (nuclear localization signal) follow at residues 379-386 (EKREAEWK) and 693-700 (IRKDVDDL). 2 positions are modified to phosphoserine: Ser774 and Ser803. Basic and acidic residues predominate over residues 849–859 (AESETGTKEVE). 4 disordered regions span residues 849–871 (AESE…DQSD), 883–909 (SLSN…TRSV), 924–1039 (INLY…VQQE), and 1061–1132 (GVST…FLTT). The span at 861-871 (TNVNSDGDQSD) shows a compositional bias: polar residues. Phosphoserine is present on residues Ser865 and Ser883. Positions 895–907 (MKGKGKARTRRTR) are enriched in basic residues. Ser908 bears the Phosphoserine mark. Phosphoserine is present on residues Ser1093, Ser1105, and Ser1112. The span at 1095-1105 (DVNKTPLRADS) shows a compositional bias: basic and acidic residues.

This sequence belongs to the CRWN family. Core component of the LINC complex which is composed of inner nuclear membrane SUN domain-containing proteins coupled to outer nuclear membrane WIP and WIT proteins. The LINC complex also involves nucleoskeletal proteins CRWN/LINC and possibly KAKU4 and the cytoskeletal myosin KAKU1. Interacts with SUN1 and SUN2. Binds to KAKU4. In terms of tissue distribution, expressed at low levels in roots, leaves, flowers and flower stalks.

Its subcellular location is the nucleus membrane. It is found in the nucleus. The protein resides in the nucleoplasm. The protein localises to the nucleus lamina. In terms of biological role, component of SUN-protein-containing multivariate complexes also called LINC complexes which link the nucleoskeleton and cytoskeleton by providing versatile outer nuclear membrane attachment sites for cytoskeletal filaments. Required for nucleus structure organization (e.g. size and shape). This is Protein CROWDED NUCLEI 1 from Arabidopsis thaliana (Mouse-ear cress).